We begin with the raw amino-acid sequence, 310 residues long: MPLRLIFMGTPDFAVPTLRELHAQGHEIAAVYTRAAKPAGRGMKLQITPVEKAARELGLPVLTPSTLRTPEAEAEFRAHNADAAVVVAYGMILPANILNAVPRGCFNLHASLLPRWRGAAPIQRAIMTGDAESGVMVMKMDVGLDTGDVAMTDRLQITDAMTAQDLHDALAPRGARLMAQAMVALEQGSLNLKPQGEEGVTYAAKIGKAEAKIDWARPAHDVLRHIHGLSPFPGAWFEVAIDGAPVRIKVLRCELVKGSGAPGALLDDRLTIACGEGAIRLLDVQRAGKQPMRALDFLRGTPLIPPLSVM.

111 to 114 serves as a coordination point for (6S)-5,6,7,8-tetrahydrofolate; sequence SLLP.

It belongs to the Fmt family.

It catalyses the reaction L-methionyl-tRNA(fMet) + (6R)-10-formyltetrahydrofolate = N-formyl-L-methionyl-tRNA(fMet) + (6S)-5,6,7,8-tetrahydrofolate + H(+). Its function is as follows. Attaches a formyl group to the free amino group of methionyl-tRNA(fMet). The formyl group appears to play a dual role in the initiator identity of N-formylmethionyl-tRNA by promoting its recognition by IF2 and preventing the misappropriation of this tRNA by the elongation apparatus. This chain is Methionyl-tRNA formyltransferase, found in Afipia carboxidovorans (strain ATCC 49405 / DSM 1227 / KCTC 32145 / OM5) (Oligotropha carboxidovorans).